The primary structure comprises 306 residues: Phenylcoumaran benzylic ether reductase IRL1 (306 aa).

NADP(+)-binding positions include 10–16 (GATGYIG), Arg-35, and Lys-44. The active-site Proton acceptor is the Lys-132. Residue Arg-136 coordinates NADP(+).

This sequence belongs to the NmrA-type oxidoreductase family. Isoflavone reductase subfamily. As to expression, highly expressed in sclerotesta. Expressed in roots, and two-to-four year stems.

It catalyses the reaction (-)-dehydrodiconiferyl alcohol + NADPH + H(+) = (S)-isodihydrodehydrodiconiferyl alcohol + NADP(+). The catalysed reaction is (+)-dehydrodiconiferyl alcohol + NADPH + H(+) = (R)-isodihydrodehydrodiconiferyl alcohol + NADP(+). It carries out the reaction (2R,3S)-dihydrodehydrodiconiferyl alcohol + NADPH + H(+) = (S)-tetrahydrodehydrodiconiferyl alcohol + NADP(+). The enzyme catalyses (2S,3R)-dihydrodehydrodiconiferyl alcohol + NADPH + H(+) = (R)-tetrahydrodehydrodiconiferyl alcohol + NADP(+). In terms of biological role, oxidoreductase involved in lignan biosynthesis. Catalyzes the NADPH-dependent reduction of phenylcoumaran benzylic ethers. Converts dehydrodiconiferyl alcohol (DDC) to isodihydrodehydrodiconiferyl alcohol (IDDDC), and dihydrodehydrodiconiferyl alcohol (DDDC) to tetrahydrodehydrodiconiferyl alcohol (TDDC). May regulate changes in lignin content and accumulation of flavonoids. This is Phenylcoumaran benzylic ether reductase IRL1 from Ginkgo biloba (Ginkgo).